A 124-amino-acid polypeptide reads, in one-letter code: Small ribosomal subunit protein uS12 (124 aa).

The residue at position 89 (aspartate 89) is a 3-methylthioaspartic acid. The tract at residues 101-124 is disordered; the sequence is TLDTSGVKDRRQSRSKYGAKAPKE.

It belongs to the universal ribosomal protein uS12 family. As to quaternary structure, part of the 30S ribosomal subunit. Contacts proteins S8 and S17. May interact with IF1 in the 30S initiation complex.

Its function is as follows. With S4 and S5 plays an important role in translational accuracy. Functionally, interacts with and stabilizes bases of the 16S rRNA that are involved in tRNA selection in the A site and with the mRNA backbone. Located at the interface of the 30S and 50S subunits, it traverses the body of the 30S subunit contacting proteins on the other side and probably holding the rRNA structure together. The combined cluster of proteins S8, S12 and S17 appears to hold together the shoulder and platform of the 30S subunit. This is Small ribosomal subunit protein uS12 from Synechococcus sp. (strain CC9902).